The primary structure comprises 258 residues: Large ribosomal subunit protein bL28m (258 aa).

The N-terminal 21 residues, M1–F21, are a transit peptide targeting the mitochondrion.

The protein belongs to the bacterial ribosomal protein bL28 family. As to quaternary structure, component of the mitochondrial large ribosomal subunit (mt-LSU). Mature yeast 74S mitochondrial ribosomes consist of a small (37S) and a large (54S) subunit. The 37S small subunit contains a 15S ribosomal RNA (15S mt-rRNA) and 34 different proteins. The 54S large subunit contains a 21S rRNA (21S mt-rRNA) and 46 different proteins.

It is found in the mitochondrion. Its function is as follows. Component of the mitochondrial ribosome (mitoribosome), a dedicated translation machinery responsible for the synthesis of mitochondrial genome-encoded proteins, including at least some of the essential transmembrane subunits of the mitochondrial respiratory chain. The mitoribosomes are attached to the mitochondrial inner membrane and translation products are cotranslationally integrated into the membrane. The chain is Large ribosomal subunit protein bL28m (MRPL24) from Saccharomyces cerevisiae (strain ATCC 204508 / S288c) (Baker's yeast).